Reading from the N-terminus, the 254-residue chain is Phosphatidylglycerophosphatase B (254 aa).

The helical transmembrane segment at 2-24 (RSIARRTAVGAALLLVMPVAVWI) threads the bilayer. Over 25–54 (SGWRWQPGEQSWLLKAAFWVTETVTQPWGV) the chain is Periplasmic. Residues 55–66 (ITHLILFGWFLW) form a helical membrane-spanning segment. The Cytoplasmic portion of the chain corresponds to 67–71 (CLRFR). Residues 72-94 (IKAAFVLFAILAAAILVGQGVKS) form a helical membrane-spanning segment. Residues 95-161 (WIKDKVQEPR…QKETGFAFPS (67 aa)) lie on the Periplasmic side of the membrane. The tract at residues 97–105 (KDKVQEPRP) is phosphatase sequence motif I. The segment at 160–163 (PSGH) is phosphatase sequence motif II. A helical membrane pass occupies residues 162 to 176 (GHTMFAASWALLAVG). His163 (proton donor; for a subset of substrates) is an active-site residue. Residues 177–182 (LLWPRR) are Cytoplasmic-facing. Residues 183-202 (RTLTIAILLVWATGVMGSRL) form a helical membrane-spanning segment. The segment at 200 to 211 (SRLLLGMHWPRD) is phosphatase sequence motif III. The Periplasmic segment spans residues 203–208 (LLGMHW). His207 functions as the Nucleophile in the catalytic mechanism. Residues 209–232 (PRDLVVATLISWALVAVATWLAQR) traverse the membrane as a helical segment. The Cytoplasmic segment spans residues 233 to 254 (ICGPLTPPAEENREIAQREQES).

This sequence belongs to the PA-phosphatase related phosphoesterase family. The N-terminus is blocked.

It localises to the cell inner membrane. The protein localises to the cell outer membrane. It catalyses the reaction a 1,2-diacyl-sn-glycero-3-phospho-(1'-sn-glycero-3'-phosphate) + H2O = a 1,2-diacyl-sn-glycero-3-phospho-(1'-sn-glycerol) + phosphate. It carries out the reaction a 1,2-diacyl-sn-glycerol 3-diphosphate + H2O = a 1,2-diacyl-sn-glycero-3-phosphate + phosphate + H(+). The enzyme catalyses a 1,2-diacyl-sn-glycero-3-phosphate + H2O = a 1,2-diacyl-sn-glycerol + phosphate. The catalysed reaction is di-trans,octa-cis-undecaprenyl diphosphate + H2O = di-trans,octa-cis-undecaprenyl phosphate + phosphate + H(+). The protein operates within phospholipid metabolism; phosphatidylglycerol biosynthesis; phosphatidylglycerol from CDP-diacylglycerol: step 2/2. In terms of biological role, catalyzes the dephosphorylation of diacylglycerol diphosphate (DGPP) to phosphatidate (PA) and the subsequent dephosphorylation of PA to diacylglycerol (DAG). Also has undecaprenyl pyrophosphate phosphatase activity, required for the biosynthesis of the lipid carrier undecaprenyl phosphate. Can also use lysophosphatidic acid (LPA) and phosphatidylglycerophosphate as substrates. The pattern of activities varies according to subcellular location, PGP phosphatase activity is higher in the cytoplasmic membrane, whereas PA and LPA phosphatase activities are higher in the outer membrane. Activity is independent of a divalent cation ion and insensitive to inhibition by N-ethylmaleimide. The sequence is that of Phosphatidylglycerophosphatase B (pgpB) from Escherichia coli O157:H7.